The chain runs to 615 residues: Angiotensin-converting enzyme (615 aa).

Residues 1 to 17 form the signal peptide; it reads MRLFLLALLATLAVTQA. The Peptidase M2 domain occupies 19–607; it reads VKEEIQAKEY…IKNNVHIGWT (589 aa). N53 carries an N-linked (GlcNAc...) asparagine glycan. A disulfide bridge connects residues C133 and C141. N-linked (GlcNAc...) asparagine glycans are attached at residues N196 and N311. C336 and C354 form a disulfide bridge. H367 is a Zn(2+) binding site. E368 acts as the Proton acceptor in catalysis. Zn(2+)-binding residues include H371 and E395. H497 serves as the catalytic Proton donor. An intrachain disulfide couples C522 to C540.

It belongs to the peptidase M2 family. Zn(2+) serves as cofactor. In terms of processing, glycosylated. Expressed in vesicular structures in spermatocytes and early spermatids (at protein level).

It localises to the secreted. The protein localises to the extracellular space. The catalysed reaction is Release of a C-terminal dipeptide, oligopeptide-|-Xaa-Yaa, when Xaa is not Pro, and Yaa is neither Asp nor Glu. Thus, conversion of angiotensin I to angiotensin II, with increase in vasoconstrictor activity, but no action on angiotensin II.. Inhibited by captopril and, to a lesser extent, by lisinopril, trandolaprilat, fosinoprilat and enalaprilat. Functionally, may be involved in the specific maturation or degradation of a number of bioactive peptides. May play a role in the contractions of the heart, gut and testes, and in spermatid differentiation. The polypeptide is Angiotensin-converting enzyme (Ance) (Drosophila melanogaster (Fruit fly)).